A 227-amino-acid chain; its full sequence is 7-cyano-7-deazaguanine synthase (227 aa).

8–18 (VSGGADSATVL) serves as a coordination point for ATP. Cys-192, Cys-202, Cys-205, and Cys-208 together coordinate Zn(2+).

The protein belongs to the QueC family. Requires Zn(2+) as cofactor.

The enzyme catalyses 7-carboxy-7-deazaguanine + NH4(+) + ATP = 7-cyano-7-deazaguanine + ADP + phosphate + H2O + H(+). It functions in the pathway purine metabolism; 7-cyano-7-deazaguanine biosynthesis. In terms of biological role, catalyzes the ATP-dependent conversion of 7-carboxy-7-deazaguanine (CDG) to 7-cyano-7-deazaguanine (preQ(0)). This Rickettsia akari (strain Hartford) protein is 7-cyano-7-deazaguanine synthase.